Reading from the N-terminus, the 75-residue chain is Beta-defensin 30 (75 aa).

An N-terminal signal peptide occupies residues 1–22 (MGSLQLTLVLFVLLSYVPPVRS). 3 disulfide bridges follow: C35/C62, C42/C56, and C46/C63.

This sequence belongs to the beta-defensin family.

The protein localises to the secreted. In terms of biological role, has antibacterial activity. This is Beta-defensin 30 (Defb30) from Mus musculus (Mouse).